The chain runs to 171 residues: S-ribosylhomocysteine lyase (171 aa).

The Fe cation site is built by H54, H58, and C128.

Belongs to the LuxS family. Homodimer. Fe cation serves as cofactor.

It catalyses the reaction S-(5-deoxy-D-ribos-5-yl)-L-homocysteine = (S)-4,5-dihydroxypentane-2,3-dione + L-homocysteine. Functionally, involved in the synthesis of autoinducer 2 (AI-2) which is secreted by bacteria and is used to communicate both the cell density and the metabolic potential of the environment. The regulation of gene expression in response to changes in cell density is called quorum sensing. Catalyzes the transformation of S-ribosylhomocysteine (RHC) to homocysteine (HC) and 4,5-dihydroxy-2,3-pentadione (DPD). This Aliarcobacter butzleri (strain RM4018) (Arcobacter butzleri) protein is S-ribosylhomocysteine lyase.